The following is a 565-amino-acid chain: MNQTRVLLIFSWLTVATLLWMDWSKNKNETLEISASHNLGVDSNLELEHAVPQIHAGAVPLQKDSQLIAAAPKVPVINVTTDVLQLKLDGFSILAADLLRFPQSKDRGAKPIKLLTDDPNYPYSATTGWVSQSNSPVPNLSTFLPEQPDVSYKLANDQNRLVVPFIWTAANGVSIRRTFTFERGRYAILIRDEIRNSGETPWNAYVFRKLSRVPIPNILNRAMTNPDSFSFNGAVWYSEKGGYERRAFKDYMNDGGLNREIGGGWIALLQHHFFTAWIPQKDQASLYLLAQNGSRDIAELRGPAFTVAPGQTTTTEARLWVGPKLVEQITKEHVKGLDRVVDYSRFQLMALIGQGLFWILSHLNSLLHNWGWAIVGLVVLLRIAMYPLSASQYKSAAKMRKFQPRLQQLKERYGEDRQKFQQAMMELYKKEKINPMGGCFPILIQMPIFFALYWVLVESVELRQAPWLGWIQDLTTRDPYFILPLLNIVIMWATQKLTPTPAGMDPIAGKMMQVMPLIFGVMMAFVPSGLALYWVINGGLNLLIQWWMIRQHADFSRKRSRENIK.

6 helical membrane-spanning segments follow: residues 6–26 (VLLI…WSKN), 348–368 (LMAL…SLLH), 370–390 (WGWA…PLSA), 437–457 (GGCF…WVLV), 479–499 (PYFI…KLTP), and 516–536 (PLIF…YWVI).

It belongs to the OXA1/ALB3/YidC family. Type 1 subfamily. In terms of assembly, interacts with the Sec translocase complex via SecD. Specifically interacts with transmembrane segments of nascent integral membrane proteins during membrane integration.

It is found in the cell inner membrane. Functionally, required for the insertion and/or proper folding and/or complex formation of integral membrane proteins into the membrane. Involved in integration of membrane proteins that insert both dependently and independently of the Sec translocase complex, as well as at least some lipoproteins. Aids folding of multispanning membrane proteins. This chain is Membrane protein insertase YidC, found in Xylella fastidiosa (strain M23).